The chain runs to 238 residues: MSALRLRKVDALLAQATRALGAGRRLGFSSRGQHAELSLLPLLEDARIPADGVWLNTAVGPLLLSDAEALLSLLGEVPFTLGGEHQGWYWQLFNQRLSPVVADLLAPVAPFSDTPTELAIGCRVHVRLGSERLDTRLHAAPATLLRLLGSADWQVLNRNLDESWSVSTPLIVGELSLTREQIASLRPGDVVLPARCRFDSAGQGSVTLAGRQWAARTDQQAQHLFLQLSHEEHSHHEY.

The segment at 66-238 (DAEALLSLLG…SHEEHSHHEY (173 aa)) is hrcQa-C.

In terms of assembly, interacts with hrcQb.

It is found in the cell inner membrane. Its function is as follows. Component of the type III secretion system, which is required for effector protein delivery, parasitism, and pathogenicity. Probably participates in the formation of a C-ring-like assembly along with hrcQb. The protein is Type III secretion protein hrcQa (hrcQa) of Pseudomonas syringae pv. syringae.